A 448-amino-acid chain; its full sequence is tRNA(Ile)-lysidine synthase (448 aa).

An ATP-binding site is contributed by 30–35 (GGGADS).

It belongs to the tRNA(Ile)-lysidine synthase family.

It is found in the cytoplasm. The catalysed reaction is cytidine(34) in tRNA(Ile2) + L-lysine + ATP = lysidine(34) in tRNA(Ile2) + AMP + diphosphate + H(+). In terms of biological role, ligates lysine onto the cytidine present at position 34 of the AUA codon-specific tRNA(Ile) that contains the anticodon CAU, in an ATP-dependent manner. Cytidine is converted to lysidine, thus changing the amino acid specificity of the tRNA from methionine to isoleucine. The polypeptide is tRNA(Ile)-lysidine synthase (Idiomarina loihiensis (strain ATCC BAA-735 / DSM 15497 / L2-TR)).